Reading from the N-terminus, the 1277-residue chain is Protein FAM83H (1277 aa).

Residues 1 to 12 (MARRSQSSSQGE) are compositionally biased toward polar residues. Disordered stretches follow at residues 1–20 (MARR…PNYL), 67–98 (SLQR…SGTY), 717–756 (FGST…TNPL), 772–805 (SKLE…TGRT), 971–1018 (EQTS…NSAF), 1070–1130 (KAEE…SRLS), 1158–1225 (QKNR…RDIL), and 1247–1266 (KKDE…AGKI). Residues 724 to 750 (SVEKAKENPPAEKEKEEGLLSRHDSFR) are compositionally biased toward basic and acidic residues. Polar residues-rich tracts occupy residues 777–805 (HTST…TGRT), 971–982 (EQTSSTIQTIGN), 993–1015 (SGPT…TRPN), and 1112–1130 (KSLS…SRLS). Residues 1204 to 1215 (SFLSRSRFSRPS) show a composition bias toward low complexity. Residues 1247 to 1263 (KKDEQPSHADDNDDKKA) are compositionally biased toward basic and acidic residues.

It belongs to the FAM83 family.

It is found in the cytoplasm. The protein resides in the cytoskeleton. Functionally, may play a role in keratin cytoskeleton disassembly. In Xenopus tropicalis (Western clawed frog), this protein is Protein FAM83H.